We begin with the raw amino-acid sequence, 1233 residues long: DNA-directed RNA polymerase subunit beta' (1233 aa).

Residues Cys61, Cys63, Cys76, and Cys79 each coordinate Zn(2+). Asp455, Asp457, and Asp459 together coordinate Mg(2+). Zn(2+)-binding residues include Cys824, Cys898, Cys905, and Cys908. Residues 1211–1220 (ELQKAFDKEP) show a composition bias toward basic and acidic residues. The segment at 1211–1233 (ELQKAFDKEPASSTGNKASNSAK) is disordered. Residues 1221–1233 (ASSTGNKASNSAK) show a composition bias toward polar residues.

It belongs to the RNA polymerase beta' chain family. In terms of assembly, the RNAP catalytic core consists of 2 alpha, 1 beta, 1 beta' and 1 omega subunit. When a sigma factor is associated with the core the holoenzyme is formed, which can initiate transcription. Requires Mg(2+) as cofactor. The cofactor is Zn(2+).

The catalysed reaction is RNA(n) + a ribonucleoside 5'-triphosphate = RNA(n+1) + diphosphate. In terms of biological role, DNA-dependent RNA polymerase catalyzes the transcription of DNA into RNA using the four ribonucleoside triphosphates as substrates. This is DNA-directed RNA polymerase subunit beta' from Oenococcus oeni (strain ATCC BAA-331 / PSU-1).